The sequence spans 235 residues: Small ribosomal subunit protein uS3 (235 aa).

Residues 39 to 107 (VRKFLNKELA…PAQINIAEVK (69 aa)) enclose the KH type-2 domain.

This sequence belongs to the universal ribosomal protein uS3 family. As to quaternary structure, part of the 30S ribosomal subunit. Forms a tight complex with proteins S10 and S14.

In terms of biological role, binds the lower part of the 30S subunit head. Binds mRNA in the 70S ribosome, positioning it for translation. The polypeptide is Small ribosomal subunit protein uS3 (Actinobacillus pleuropneumoniae serotype 5b (strain L20)).